A 140-amino-acid chain; its full sequence is MTRNERIFHAVLFELMALAIIVPAAALITGKGSSDLALVGIGLSLYTVVWNYIYNLYFDKWFGSNRADRSLAMRLGHTVGFEGGLIFISIPVIAWFLEITFLRALMLEAGFLVFFLFYATGFNWLYDKVQPFGKMRKLLV.

Helical transmembrane passes span 7–27 (IFHA…AAAL), 36–56 (LALV…IYNL), 79–99 (VGFE…FLEI), and 105–125 (LMLE…FNWL).

This sequence belongs to the proteobacterial antimicrobial compound efflux (PACE) (TC 2.A.117) family.

The protein resides in the cell inner membrane. In terms of biological role, mediates the efflux of short-chain diamines when energized by an electrochemical gradient. Confers resistance to chlorhexidine, benzalkonium, proflavine and acriflavine. Mediates efflux of both proflavine and acriflavine via an energy-dependent mechanism. This is Short-chain diamines transporter from Vibrio parahaemolyticus serotype O3:K6 (strain RIMD 2210633).